A 651-amino-acid polypeptide reads, in one-letter code: MTDNNSKSKDSSQKIPNDSLTPTISKGLRKDVFYWTKAIAYTTWNFFDSSPVTPQRNPISLFVRGLSHPFLRHRLSKSQFNEWFLSHNGVDPVQAQTLPDPLLFDIPDHQETSYSLLEGYSVTAHDHSDTSPLPITSSNQKEGKKNVSSIDVSMVSDSSEFKPDSLQHEKLVKKCNQLRLQKLINSSELAQIDLELSKLYSRRRQVLERLSKIEEQNLKYTSKLASVEKLMLDSDAQDLYSSYSHDLIPSQIEAGKNGANPDVFDDTHDKYTDNLSARAISPRAPRPSTASEVVSDYFEQNSAFSKAPENTESSVNQNYIVGNLVKQFQAHSEYITSLDFSHPFGTLATASTDKTVKVWDMAGVVYLGSLKGHSDYVSCLAIQDSFIATGSMDTTVRLWNLDNDVLHKDNPVEESLNSPPDQPVDNATNVLTSHTAPVTALALSSDDVLITGADDKTVRQWDIVTGRCIQTLDFVWAETHDTSTSQILVSDTYKQEPFIRALDCLDAAVASGTVDGLIRIWDLRIGLPVRSFIGHTAPISSLQFDSNHLYSGSYDNSVRIWDLRSGSPINIIPMEKKVNSLRLYQGRLAVASDEPNVRIFDTVSNRNWICSIPSHSDSIAAEPNSVPTSVQYKDRFLVDGKSDGSVSVFSA.

Basic and acidic residues predominate over residues 1 to 12; the sequence is MTDNNSKSKDSS. Disordered regions lie at residues 1 to 21 and 125 to 144; these read MTDN…DSLT and HDHS…KEGK. The span at 130–140 shows a compositional bias: polar residues; it reads TSPLPITSSNQ. The stretch at 195–229 forms a coiled coil; it reads ELSKLYSRRRQVLERLSKIEEQNLKYTSKLASVEK. 7 WD repeats span residues 330–369, 372–409, 433–473, 492–531, 534–573, 575–610, and 620–650; these read AHSE…YLGS, GHSD…LHKD, SHTA…QTLD, TYKQ…PVRS, GHTA…NIIP, EKKV…NWIC, and AAEP…SVFS.

This sequence belongs to the WD repeat MDV1/CAF4 family.

It localises to the mitochondrion outer membrane. Its function is as follows. Involved in mitochondrial fission. Acts as an adapter protein required to form mitochondrial fission complexes. Formation of these complexes is required to promote constriction and fission of the mitochondrial compartment at a late step in mitochondrial division. The protein is Mitochondrial division protein 1 (mdv1) of Schizosaccharomyces pombe (strain 972 / ATCC 24843) (Fission yeast).